Here is a 148-residue protein sequence, read N- to C-terminus: Deoxyuridine 5'-triphosphate nucleotidohydrolase (148 aa).

This sequence belongs to the dUTPase family. Mg(2+) serves as cofactor.

The enzyme catalyses dUTP + H2O = dUMP + diphosphate + H(+). It functions in the pathway pyrimidine metabolism; dUMP biosynthesis; dUMP from dCTP (dUTP route): step 2/2. This enzyme decreases the intracellular concentration of dUTP so that uracil cannot be incorporated into viral progeny DNA. This activity is sufficient to exclude uracil from the DNA during phage replication. In the case of dUTPase mutant phages, the host dUTPase activity is not sufficient to exclude uracil from T5 DNA and uracil are incorporated, leading to decreased phage viability. The chain is Deoxyuridine 5'-triphosphate nucleotidohydrolase (DUT) from Escherichia coli (Enterobacteria phage T5).